A 286-amino-acid chain; its full sequence is Putative electron transfer flavoprotein subunit YgcQ (286 aa).

225–253 provides a ligand contact to FAD; it reads VCIVVGASGAAALMAGVRNSKFVVAINHD.

It belongs to the ETF alpha-subunit/FixB family. As to quaternary structure, ygcQ and YgcR form a heterodimer.

Its function is as follows. May play a role in a redox process. The polypeptide is Putative electron transfer flavoprotein subunit YgcQ (ygcQ) (Escherichia coli (strain K12)).